Consider the following 102-residue polypeptide: Spexin prohormone 1 (102 aa).

Residues 1–26 form the signal peptide; that stretch reads MKDLRTLAAYALALLLLATFVSHSWS. A propeptide spanning residues 27–35 is cleaved from the precursor; it reads APKGSFQRR. The residue at position 49 (Gln-49) is a Glutamine amide. The propeptide occupies 50–102; sequence GRRFVSEDRNEGDLYDTIRLESRSQNTENLSISKAAAFLLNILQQARDEDEPY.

The protein belongs to the spexin family. In terms of tissue distribution, mainly expressed in the brain and ovary. Detected bilaterally in the adult brainstem. Expressed in neurons in the dorsal habenula (dHb). In the dHb some neurons project into the interpeduncular nucleus (IPN) where expression often overlaps with galr2a and galr2b. Weakly expressed in the liver, intestine, kidney, heart and gill.

The protein localises to the secreted. Its subcellular location is the extracellular space. It localises to the cytoplasmic vesicle. It is found in the secretory vesicle. Plays a role in the regulation of food intake and energy metabolism. May also be involved in suppressing the anxiety response by promoting the expression of serotonin-related genes such as fev, tph2 and slc6a4a. Functionally, acts as a ligand for galanin receptors galr2a and galr2b. Brain administration of the peptide inhibits food consumption and elevates levels of glucose, triacylglycerol and cholesterol in the serum. Likely to control food intake by regulating appetite related genes which includes the negative regulation of the orexigenic factor agrp. By controlling food intake it may act as a satiety factor in energy metabolism. The polypeptide is Spexin prohormone 1 (spx) (Danio rerio (Zebrafish)).